A 187-amino-acid polypeptide reads, in one-letter code: Large ribosomal subunit protein uL10 (187 aa).

This sequence belongs to the universal ribosomal protein uL10 family. As to quaternary structure, part of the ribosomal stalk of the 50S ribosomal subunit. The N-terminus interacts with L11 and the large rRNA to form the base of the stalk. The C-terminus forms an elongated spine to which L12 dimers bind in a sequential fashion forming a multimeric L10(L12)X complex.

Forms part of the ribosomal stalk, playing a central role in the interaction of the ribosome with GTP-bound translation factors. The polypeptide is Large ribosomal subunit protein uL10 (Roseiflexus castenholzii (strain DSM 13941 / HLO8)).